The chain runs to 192 residues: Signal peptidase complex subunit 2 (192 aa).

At 1–46 (MEEKKTESTNKNVKKANLLDHHSIKHILDESVSDIVTSRGYKEDVR) the chain is on the cytoplasmic side. A helical transmembrane segment spans residues 47-69 (LSNLKLILGTIIIVVALVAQFYN). The Lumenal segment spans residues 70-78 (KKFPENRDF). The chain crosses the membrane as a helical span at residues 79–98 (LIGCIALYVVLNAVLQLILY). Residues 99–192 (TKEKNAILFT…YAEEEPKKKK (94 aa)) are Cytoplasmic-facing.

It belongs to the SPCS2 family. Component of the signal peptidase complex (SPC) composed of a catalytic subunit SEC11 and three accessory subunits SPCS1, SPCS2 and SPCS3. The complex induces a local thinning of the ER membrane which is used to measure the length of the signal peptide (SP) h-region of protein substrates. This ensures the selectivity of the complex towards h-regions shorter than 18-20 amino acids.

Its subcellular location is the endoplasmic reticulum membrane. Component of the signal peptidase complex (SPC) which catalyzes the cleavage of N-terminal signal sequences from nascent proteins as they are translocated into the lumen of the endoplasmic reticulum. Enhances the enzymatic activity of SPC and facilitates the interactions between different components of the translocation site. This chain is Signal peptidase complex subunit 2, found in Arabidopsis thaliana (Mouse-ear cress).